The chain runs to 260 residues: Phosphate import ATP-binding protein PstB (260 aa).

The ABC transporter domain maps to 14-255 (IETENLNLFY…PKNTKTEEYI (242 aa)). 46-53 (GPSGCGKS) serves as a coordination point for ATP.

Belongs to the ABC transporter superfamily. Phosphate importer (TC 3.A.1.7) family. As to quaternary structure, the complex is composed of two ATP-binding proteins (PstB), two transmembrane proteins (PstC and PstA) and a solute-binding protein (PstS).

Its subcellular location is the cell inner membrane. It catalyses the reaction phosphate(out) + ATP + H2O = ADP + 2 phosphate(in) + H(+). Functionally, part of the ABC transporter complex PstSACB involved in phosphate import. Responsible for energy coupling to the transport system. The chain is Phosphate import ATP-binding protein PstB from Borreliella burgdorferi (strain ATCC 35210 / DSM 4680 / CIP 102532 / B31) (Borrelia burgdorferi).